A 329-amino-acid chain; its full sequence is Gamma-resorcylate decarboxylase (329 aa).

Zn(2+) is bound by residues Glu-8, His-10, His-167, and Asp-290. Residue Asp-290 is part of the active site.

Belongs to the metallo-dependent hydrolases superfamily. ACMSD family. The cofactor is Zn(2+).

The catalysed reaction is 2,6-dihydroxybenzoate + H(+) = resorcinol + CO2. It functions in the pathway aromatic compound metabolism. Its function is as follows. Involved in the gamma-resorcylate (2,6-dihydroxybenzoate) catabolism. Catalyzes the reversible decarboxylation of gamma-resorcylate to resorcinol. In Rhodococcus jostii (strain RHA1), this protein is Gamma-resorcylate decarboxylase.